The following is a 309-amino-acid chain: Aspartate carbamoyltransferase catalytic subunit (309 aa).

Positions 57 and 58 each coordinate carbamoyl phosphate. K86 is a binding site for L-aspartate. The carbamoyl phosphate site is built by R107, H135, and Q138. Residues R168 and R229 each coordinate L-aspartate. 2 residues coordinate carbamoyl phosphate: L269 and P270.

Belongs to the aspartate/ornithine carbamoyltransferase superfamily. ATCase family. Heterooligomer of catalytic and regulatory chains.

It carries out the reaction carbamoyl phosphate + L-aspartate = N-carbamoyl-L-aspartate + phosphate + H(+). It functions in the pathway pyrimidine metabolism; UMP biosynthesis via de novo pathway; (S)-dihydroorotate from bicarbonate: step 2/3. Catalyzes the condensation of carbamoyl phosphate and aspartate to form carbamoyl aspartate and inorganic phosphate, the committed step in the de novo pyrimidine nucleotide biosynthesis pathway. In Methanopyrus kandleri (strain AV19 / DSM 6324 / JCM 9639 / NBRC 100938), this protein is Aspartate carbamoyltransferase catalytic subunit.